Here is a 225-residue protein sequence, read N- to C-terminus: Endonuclease V (225 aa).

D43 and D110 together coordinate Mg(2+).

It belongs to the endonuclease V family. Mg(2+) serves as cofactor.

Its subcellular location is the cytoplasm. The catalysed reaction is Endonucleolytic cleavage at apurinic or apyrimidinic sites to products with a 5'-phosphate.. In terms of biological role, DNA repair enzyme involved in the repair of deaminated bases. Selectively cleaves double-stranded DNA at the second phosphodiester bond 3' to a deoxyinosine leaving behind the intact lesion on the nicked DNA. This chain is Endonuclease V, found in Thermotoga sp. (strain RQ2).